A 280-amino-acid polypeptide reads, in one-letter code: RNA polymerase II holoenzyme cyclin-like subunit (280 aa).

The region spanning 23–150 (ERRKGLEDIF…LIEELGTYLV (128 aa)) is the Cyclin N-terminal domain.

The protein belongs to the cyclin family. Cyclin C subfamily. In terms of assembly, component of the SRB8-11 complex, a regulatory module of the Mediator complex.

Its subcellular location is the nucleus. Component of the SRB8-11 complex. The SRB8-11 complex is a regulatory module of the Mediator complex which is itself involved in regulation of basal and activated RNA polymerase II-dependent transcription. The SRB8-11 complex may be involved in the transcriptional repression of a subset of genes regulated by Mediator. It may inhibit the association of the Mediator complex with RNA polymerase II to form the holoenzyme complex. The SRB8-11 complex phosphorylates the C-terminal domain (CTD) of the largest subunit of RNA polymerase II. This chain is RNA polymerase II holoenzyme cyclin-like subunit (SSN8), found in Yarrowia lipolytica (strain CLIB 122 / E 150) (Yeast).